Here is a 54-residue protein sequence, read N- to C-terminus: Large ribosomal subunit protein bL33 (54 aa).

The protein belongs to the bacterial ribosomal protein bL33 family.

This Xylella fastidiosa (strain M23) protein is Large ribosomal subunit protein bL33.